The following is an 81-amino-acid chain: Costars family protein ABRACL (81 aa).

This sequence belongs to the costars family.

The polypeptide is Costars family protein ABRACL (abracl) (Xenopus tropicalis (Western clawed frog)).